Reading from the N-terminus, the 20-residue chain is Phospholipase A2 homolog P-elapitoxin-Aa1a gamma chain (20 aa).

This sequence belongs to the phospholipase A2 family. Group I subfamily. In terms of assembly, heterotrimer of alpha, beta and gamma chains, each related to PLA2. Post-translationally, glycosylated. In terms of tissue distribution, expressed by the venom gland.

Its subcellular location is the secreted. Heterotrimer: Snake venom phospholipase A2 (PLA2) that has presynaptic neurotoxicity. Inhibits nerve-evoked twitch contractions but not responses to cholinergic agonists acetylcholine and carbachol and to depolarizing agonist KCl. Causes a fade in tetanic contractions. Displays a triphasic mode of action with depression, enhancement and blockade of neurotransmission. Does not display myotoxic activity such as changes in baseline muscle tension or inhibition of directly stimulated muscle twitches. All subunits are necessary for maximum toxicity. Functionally, monomer: the gamma chain has no significant enzymatic activity and is not toxic by itself. In Acanthophis antarcticus (Common death adder), this protein is Phospholipase A2 homolog P-elapitoxin-Aa1a gamma chain.